Here is a 231-residue protein sequence, read N- to C-terminus: 5'-methylthioadenosine/S-adenosylhomocysteine nucleosidase (231 aa).

The active-site Proton acceptor is the glutamate 12. Substrate contacts are provided by residues glycine 78, methionine 153, and 174–175; that span reads ME. Aspartate 198 (proton donor) is an active-site residue.

It belongs to the PNP/UDP phosphorylase family. MtnN subfamily.

The catalysed reaction is S-adenosyl-L-homocysteine + H2O = S-(5-deoxy-D-ribos-5-yl)-L-homocysteine + adenine. It catalyses the reaction S-methyl-5'-thioadenosine + H2O = 5-(methylsulfanyl)-D-ribose + adenine. It carries out the reaction 5'-deoxyadenosine + H2O = 5-deoxy-D-ribose + adenine. Its pathway is amino-acid biosynthesis; L-methionine biosynthesis via salvage pathway; S-methyl-5-thio-alpha-D-ribose 1-phosphate from S-methyl-5'-thioadenosine (hydrolase route): step 1/2. Catalyzes the irreversible cleavage of the glycosidic bond in both 5'-methylthioadenosine (MTA) and S-adenosylhomocysteine (SAH/AdoHcy) to adenine and the corresponding thioribose, 5'-methylthioribose and S-ribosylhomocysteine, respectively. Also cleaves 5'-deoxyadenosine, a toxic by-product of radical S-adenosylmethionine (SAM) enzymes, into 5-deoxyribose and adenine. The chain is 5'-methylthioadenosine/S-adenosylhomocysteine nucleosidase from Bacillus thuringiensis subsp. konkukian (strain 97-27).